Consider the following 525-residue polypeptide: GMP synthase [glutamine-hydrolyzing] (525 aa).

Residues 9-207 (RILILDFGSQ…VQDICGCEAL (199 aa)) form the Glutamine amidotransferase type-1 domain. Catalysis depends on Cys86, which acts as the Nucleophile. Active-site residues include His181 and Glu183. In terms of domain architecture, GMPS ATP-PPase spans 208–400 (WTASNIVEDA…LGLPYDMVYR (193 aa)). Position 235 to 241 (235 to 241 (SGGVDSS)) interacts with ATP.

As to quaternary structure, homodimer.

The catalysed reaction is XMP + L-glutamine + ATP + H2O = GMP + L-glutamate + AMP + diphosphate + 2 H(+). It participates in purine metabolism; GMP biosynthesis; GMP from XMP (L-Gln route): step 1/1. Its function is as follows. Catalyzes the synthesis of GMP from XMP. The sequence is that of GMP synthase [glutamine-hydrolyzing] from Pseudomonas entomophila (strain L48).